The sequence spans 402 residues: Major outer membrane porin (402 aa).

The first 22 residues, 1–22, serve as a signal peptide directing secretion; it reads MKKLLKSALLFAATGSALSLQA.

The protein belongs to the chlamydial porin (CP) (TC 1.B.2) family. As to quaternary structure, part of a disulfide cross-linked outer membrane complex (COMC) composed of the major outer membrane porin (MOMP), the small cysteine-rich protein (OmcA) and the large cysteine-rich periplasmic protein (OmcB).

Its subcellular location is the cell outer membrane. In elementary bodies (EBs, the infectious stage, which is able to survive outside the host cell) provides the structural integrity of the outer envelope through disulfide cross-links with the small cysteine-rich protein and the large cysteine-rich periplasmic protein. It has been described in publications as the Sarkosyl-insoluble COMC (Chlamydia outer membrane complex), and serves as the functional equivalent of peptidoglycan. It is present but some of the disulfide bonds are reduced in reticulate bodies (RBs). Functionally, permits diffusion of specific solutes through the outer membrane. In Chlamydophila psittaci (strain ATCC VR-125 / 6BC) (Chlamydia psittaci), this protein is Major outer membrane porin (ompA).